The sequence spans 180 residues: Inosine/xanthosine triphosphatase (180 aa).

8–13 is a substrate binding site; sequence TTNPAK. Mg(2+)-binding residues include Asp-38 and Glu-68. Residue 68 to 69 coordinates substrate; the sequence is EA.

The protein belongs to the YjjX NTPase family. In terms of assembly, homodimer. The cofactor is Mg(2+). It depends on Mn(2+) as a cofactor.

The enzyme catalyses XTP + H2O = XDP + phosphate + H(+). The catalysed reaction is ITP + H2O = IDP + phosphate + H(+). Functionally, phosphatase that hydrolyzes non-canonical purine nucleotides such as XTP and ITP to their respective diphosphate derivatives. Probably excludes non-canonical purines from DNA/RNA precursor pool, thus preventing their incorporation into DNA/RNA and avoiding chromosomal lesions. This is Inosine/xanthosine triphosphatase from Yersinia pestis bv. Antiqua (strain Antiqua).